We begin with the raw amino-acid sequence, 607 residues long: Fatty acid amide hydrolase (607 aa).

Catalysis depends on charge relay system residues K205 and S281. Residue G302–S305 coordinates substrate. Catalysis depends on S305, which acts as the Acyl-ester intermediate.

Belongs to the amidase family. Forms homodimers. As to expression, expressed in roots, leaves and flowers. Expressed in seedlings, flowers, roots, siliques, seeds and leaves.

It localises to the endoplasmic reticulum membrane. The protein localises to the cell membrane. It carries out the reaction N-(5Z,8Z,11Z,14Z-eicosatetraenoyl)-ethanolamine + H2O = ethanolamine + (5Z,8Z,11Z,14Z)-eicosatetraenoate. The catalysed reaction is N-(9Z,12Z-octadecadienoyl)-ethanolamine + H2O = ethanolamine + (9Z,12Z)-octadecadienoate. The enzyme catalyses N-hexadecanoylethanolamine + H2O = ethanolamine + hexadecanoate. It catalyses the reaction N-tetradecanoylethanolamine + H2O = tetradecanoate + ethanolamine. It carries out the reaction N-dodecanoylethanolamine + H2O = dodecanoate + ethanolamine. Inhibited by methyl arachidonyl fluorophosphonate (MAFP). Catalyzes the hydrolysis of bioactive endogenous fatty acid amides to their corresponding acids. The hydrolysis of endogenous amidated lipids terminates their participation as lipid mediators in various signaling systems. Converts a wide range of N-acylethanolamines (NAEs) to their corresponding free fatty acids and ethanolamine. Can use oleamide as substrate, but not indole-3-acetamide, 1-naphtalene-acetamide, nicotinic acid amide or L-asparagine. Can use 2-arachidonylglycerol as substrate. Participates in the regulation of plant growth. Hydrolyzes N-dodecanoylethanolamine, which is has a growth inhibitory effect on seedling growth. Involved in plant defense signaling. Involved in abscisic acid (ABA) signaling through mechanisms that are independent of the catalytic activity. Involved in the regulation of flowering time. Catalyzes the hydrolysis of N-acyl L-homoserine lactones (AHLs), which are a class of signaling molecules produced by bacteria for quorum sensing. Accumulation of L-homoserine appears to encourage plant growth at low concentrations by stimulating transpiration, but higher concentrations inhibit growth by stimulating ethylene production. The protein is Fatty acid amide hydrolase of Arabidopsis thaliana (Mouse-ear cress).